The following is a 388-amino-acid chain: Succinate--CoA ligase [ADP-forming] subunit beta (388 aa).

The region spanning 9–244 (KQLFAEYGLP…PSQEDEREAH (236 aa)) is the ATP-grasp domain. Residues lysine 46, 53 to 55 (GRG), glutamate 99, threonine 102, and glutamate 107 contribute to the ATP site. Asparagine 199 and aspartate 213 together coordinate Mg(2+). Residues asparagine 264 and 321–323 (GIV) each bind substrate.

Belongs to the succinate/malate CoA ligase beta subunit family. In terms of assembly, heterotetramer of two alpha and two beta subunits. Mg(2+) is required as a cofactor.

It catalyses the reaction succinate + ATP + CoA = succinyl-CoA + ADP + phosphate. The enzyme catalyses GTP + succinate + CoA = succinyl-CoA + GDP + phosphate. It participates in carbohydrate metabolism; tricarboxylic acid cycle; succinate from succinyl-CoA (ligase route): step 1/1. In terms of biological role, succinyl-CoA synthetase functions in the citric acid cycle (TCA), coupling the hydrolysis of succinyl-CoA to the synthesis of either ATP or GTP and thus represents the only step of substrate-level phosphorylation in the TCA. The beta subunit provides nucleotide specificity of the enzyme and binds the substrate succinate, while the binding sites for coenzyme A and phosphate are found in the alpha subunit. The polypeptide is Succinate--CoA ligase [ADP-forming] subunit beta (Saccharophagus degradans (strain 2-40 / ATCC 43961 / DSM 17024)).